Reading from the N-terminus, the 447-residue chain is Tubulin beta-2 chain (447 aa).

The GTP site is built by glutamine 11, glutamate 69, serine 138, glycine 142, threonine 143, glycine 144, asparagine 204, and asparagine 226. Residue glutamate 69 coordinates Mg(2+). Positions 426–447 are disordered; it reads QDAGVDEEEEEYEEEAPLEEEV. Over residues 429–447 the composition is skewed to acidic residues; it reads GVDEEEEEYEEEAPLEEEV.

It belongs to the tubulin family. In terms of assembly, dimer of alpha and beta chains. A typical microtubule is a hollow water-filled tube with an outer diameter of 25 nm and an inner diameter of 15 nM. Alpha-beta heterodimers associate head-to-tail to form protofilaments running lengthwise along the microtubule wall with the beta-tubulin subunit facing the microtubule plus end conferring a structural polarity. Microtubules usually have 13 protofilaments but different protofilament numbers can be found in some organisms and specialized cells. It depends on Mg(2+) as a cofactor.

The protein localises to the cytoplasm. Its subcellular location is the cytoskeleton. Tubulin is the major constituent of microtubules, a cylinder consisting of laterally associated linear protofilaments composed of alpha- and beta-tubulin heterodimers. Microtubules grow by the addition of GTP-tubulin dimers to the microtubule end, where a stabilizing cap forms. Below the cap, tubulin dimers are in GDP-bound state, owing to GTPase activity of alpha-tubulin. The protein is Tubulin beta-2 chain (TUB2) of Colletotrichum gloeosporioides (Anthracnose fungus).